Here is a 198-residue protein sequence, read N- to C-terminus: MLVTKLAPDFKAPAVLGNNEVDEHFELSKNLGKNGVILFFWPKDFTFVCPTEIIAFDKRVKDFHEKGFNVIGVSIDSEQVHFAWKNTPVEKGGIGQVSFPMVADITKSISRDYDVLFEEAIALRGAFLIDKNMKVRHAVINDLPLGRNADEMLRMVDALLHFEEHGEVCPAGWRKGDKGMKATHQGVAEYLKENSIKL.

The Thioredoxin domain occupies 2 to 161 (LVTKLAPDFK…MLRMVDALLH (160 aa)). C49 acts as the Cysteine sulfenic acid (-SOH) intermediate in catalysis.

The protein belongs to the peroxiredoxin family. AhpC/Prx1 subfamily. Homodimer; disulfide-linked, upon oxidation. 5 homodimers assemble to form a ring-like decamer.

It is found in the cytoplasm. The catalysed reaction is a hydroperoxide + NADH + H(+) = an alcohol + NAD(+) + H2O. Thiol-specific peroxidase that catalyzes the reduction of hydrogen peroxide and organic hydroperoxides to water and alcohols, respectively. Plays a role in cell protection against oxidative stress by detoxifying peroxides. This Helicobacter pylori (strain J99 / ATCC 700824) (Campylobacter pylori J99) protein is Alkyl hydroperoxide reductase C (ahpC).